Reading from the N-terminus, the 155-residue chain is 2-C-methyl-D-erythritol 2,4-cyclodiphosphate synthase (155 aa).

A divalent metal cation is bound by residues Asp9 and His11. 4-CDP-2-C-methyl-D-erythritol 2-phosphate-binding positions include 9 to 11 and 35 to 36; these read DSH and HS. His43 is a binding site for a divalent metal cation. Residue 57–59 participates in 4-CDP-2-C-methyl-D-erythritol 2-phosphate binding; sequence DIG.

Belongs to the IspF family. As to quaternary structure, homotrimer. A divalent metal cation is required as a cofactor.

It carries out the reaction 4-CDP-2-C-methyl-D-erythritol 2-phosphate = 2-C-methyl-D-erythritol 2,4-cyclic diphosphate + CMP. It participates in isoprenoid biosynthesis; isopentenyl diphosphate biosynthesis via DXP pathway; isopentenyl diphosphate from 1-deoxy-D-xylulose 5-phosphate: step 4/6. Its function is as follows. Involved in the biosynthesis of isopentenyl diphosphate (IPP) and dimethylallyl diphosphate (DMAPP), two major building blocks of isoprenoid compounds. Catalyzes the conversion of 4-diphosphocytidyl-2-C-methyl-D-erythritol 2-phosphate (CDP-ME2P) to 2-C-methyl-D-erythritol 2,4-cyclodiphosphate (ME-CPP) with a corresponding release of cytidine 5-monophosphate (CMP). The protein is 2-C-methyl-D-erythritol 2,4-cyclodiphosphate synthase of Koribacter versatilis (strain Ellin345).